The following is a 155-amino-acid chain: SsrA-binding protein (155 aa).

Belongs to the SmpB family.

It is found in the cytoplasm. Its function is as follows. Required for rescue of stalled ribosomes mediated by trans-translation. Binds to transfer-messenger RNA (tmRNA), required for stable association of tmRNA with ribosomes. tmRNA and SmpB together mimic tRNA shape, replacing the anticodon stem-loop with SmpB. tmRNA is encoded by the ssrA gene; the 2 termini fold to resemble tRNA(Ala) and it encodes a 'tag peptide', a short internal open reading frame. During trans-translation Ala-aminoacylated tmRNA acts like a tRNA, entering the A-site of stalled ribosomes, displacing the stalled mRNA. The ribosome then switches to translate the ORF on the tmRNA; the nascent peptide is terminated with the 'tag peptide' encoded by the tmRNA and targeted for degradation. The ribosome is freed to recommence translation, which seems to be the essential function of trans-translation. This is SsrA-binding protein from Bordetella parapertussis (strain 12822 / ATCC BAA-587 / NCTC 13253).